The primary structure comprises 280 residues: Shikimate dehydrogenase (NADP(+)) (280 aa).

Shikimate-binding positions include 15–17 (SLS) and threonine 62. The active-site Proton acceptor is the lysine 66. Shikimate-binding residues include asparagine 88 and aspartate 104. NADP(+) is bound by residues 128–132 (GAGGA), 151–156 (NRTEER), and isoleucine 222. Tyrosine 224 is a binding site for shikimate. An NADP(+)-binding site is contributed by glycine 245.

Belongs to the shikimate dehydrogenase family. Homodimer.

It catalyses the reaction shikimate + NADP(+) = 3-dehydroshikimate + NADPH + H(+). It participates in metabolic intermediate biosynthesis; chorismate biosynthesis; chorismate from D-erythrose 4-phosphate and phosphoenolpyruvate: step 4/7. In terms of biological role, involved in the biosynthesis of the chorismate, which leads to the biosynthesis of aromatic amino acids. Catalyzes the reversible NADPH linked reduction of 3-dehydroshikimate (DHSA) to yield shikimate (SA). This Methanosarcina acetivorans (strain ATCC 35395 / DSM 2834 / JCM 12185 / C2A) protein is Shikimate dehydrogenase (NADP(+)).